The sequence spans 279 residues: Dermonecrotic toxin LrSicTox-alphaIA1i (279 aa).

H11 is a catalytic residue. Residues E31 and D33 each coordinate Mg(2+). The active-site Nucleophile is the H47. 2 cysteine pairs are disulfide-bonded: C51–C57 and C53–C196. D91 contacts Mg(2+). N256 carries N-linked (GlcNAc...) asparagine glycosylation.

The protein belongs to the arthropod phospholipase D family. Class II subfamily. Mg(2+) is required as a cofactor. In terms of tissue distribution, expressed by the venom gland.

The protein localises to the secreted. It catalyses the reaction an N-(acyl)-sphingosylphosphocholine = an N-(acyl)-sphingosyl-1,3-cyclic phosphate + choline. It carries out the reaction an N-(acyl)-sphingosylphosphoethanolamine = an N-(acyl)-sphingosyl-1,3-cyclic phosphate + ethanolamine. The catalysed reaction is a 1-acyl-sn-glycero-3-phosphocholine = a 1-acyl-sn-glycero-2,3-cyclic phosphate + choline. The enzyme catalyses a 1-acyl-sn-glycero-3-phosphoethanolamine = a 1-acyl-sn-glycero-2,3-cyclic phosphate + ethanolamine. With respect to regulation, inhibited with low affinity by edelfosine. In terms of biological role, dermonecrotic toxins cleave the phosphodiester linkage between the phosphate and headgroup of certain phospholipids (sphingolipid and lysolipid substrates), forming an alcohol (often choline) and a cyclic phosphate. This toxin acts on sphingomyelin (SM). It also acts on a broad range of lysophospholipids, like lysophosphatidylinositol (LPI), lysophosphatidylglycerol (LPG), lysophosphatidylethanolamine (LPE), lysobisphosphatidic acid (LBPA), lysophosphatidylserine (LPS) and lysophosphatidylcholines (LPC) of varying chain lengths. The substrate preference is LPI &gt; LPG &gt; LPS &gt; LPC &gt;&gt; LPE, LBPA. Furthermore, the enzyme also act on cyclic phosphatidic acid and lyso-platelet activating factor (LPAF, an alkyl-LPC). The enzyme does not act on sphingosylphosphorylcholine (SPC, also known as lyso-sphingomyelin) and PAF. The toxin may also act on ceramide phosphoethanolamine (CPE). It acts by transphosphatidylation, releasing exclusively cyclic phosphate products as second products. It does not exhibit detectable PLA1/2 activity. It induces dose-dependent hemolysis and dermonecrosis. Also induces increased vascular permeability, edema, inflammatory response, and platelet aggregation. This chain is Dermonecrotic toxin LrSicTox-alphaIA1i, found in Loxosceles reclusa (Brown recluse spider).